The following is a 160-amino-acid chain: Nucleotide-binding protein Ping_2261 (160 aa).

This sequence belongs to the YajQ family.

In terms of biological role, nucleotide-binding protein. The chain is Nucleotide-binding protein Ping_2261 from Psychromonas ingrahamii (strain DSM 17664 / CCUG 51855 / 37).